The sequence spans 318 residues: Probable cell division protein WhiA (318 aa).

A DNA-binding region (H-T-H motif) is located at residues 281–314 (SLKELGQMLVPPVGKSGVNHRLRKIEEISKKLKE).

This sequence belongs to the WhiA family.

Its function is as follows. Involved in cell division and chromosome segregation. This Thermoanaerobacter pseudethanolicus (strain ATCC 33223 / 39E) (Clostridium thermohydrosulfuricum) protein is Probable cell division protein WhiA.